We begin with the raw amino-acid sequence, 165 residues long: Pro-MCH (165 aa).

The first 21 residues, 1–21 (MAKMSLSSYLLILTFSLFSQG), serve as a signal peptide directing secretion. Residues 68–88 (NDDSSFMNDEENKNSKNTGSK) form a disordered region. The residue at position 143 (Ile-143) is an Isoleucine amide. Cys-153 and Cys-162 are joined by a disulfide.

This sequence belongs to the melanin-concentrating hormone family. In terms of processing, pro-MCH is processed differentially in the brain and in peripheral organs producing two neuropeptides; NEI and MCH. A third peptide, NGE, may also be produced. Preferential processing in neurons by prohormone convertase 2 (PC2) generates NEI. MCH is generated in neurons of the lateral hypothalmic area by several prohormone convertases including PC1/3, PC2 and PC5/6.

The protein resides in the secreted. Its function is as follows. MCH may act as a neurotransmitter or neuromodulator in a broad array of neuronal functions directed toward the regulation of goal-directed behavior, such as food intake, and general arousal. The protein is Pro-MCH (PMCH) of Canis lupus familiaris (Dog).